The following is a 596-amino-acid chain: Elongation factor 4 (596 aa).

A tr-type G domain is found at 2-184 (KHIRNFSIIA…VIVEQIPPPE (183 aa)). Residues 14–19 (DHGKST) and 131–134 (NKID) each bind GTP.

Belongs to the TRAFAC class translation factor GTPase superfamily. Classic translation factor GTPase family. LepA subfamily.

Its subcellular location is the cell inner membrane. It carries out the reaction GTP + H2O = GDP + phosphate + H(+). Required for accurate and efficient protein synthesis under certain stress conditions. May act as a fidelity factor of the translation reaction, by catalyzing a one-codon backward translocation of tRNAs on improperly translocated ribosomes. Back-translocation proceeds from a post-translocation (POST) complex to a pre-translocation (PRE) complex, thus giving elongation factor G a second chance to translocate the tRNAs correctly. Binds to ribosomes in a GTP-dependent manner. The sequence is that of Elongation factor 4 from Shewanella piezotolerans (strain WP3 / JCM 13877).